Here is a 541-residue protein sequence, read N- to C-terminus: Chaperonin GroEL (541 aa).

Residues 29-32 (TLGP), 86-90 (DGTTT), Gly-413, 476-478 (NAA), and Asp-492 each bind ATP. A disordered region spans residues 521–541 (KPEENAPAAPAAPNPGMGGMM). Residues 525-535 (NAPAAPAAPNP) show a composition bias toward low complexity.

It belongs to the chaperonin (HSP60) family. Forms a cylinder of 14 subunits composed of two heptameric rings stacked back-to-back. Interacts with the co-chaperonin GroES.

It is found in the cytoplasm. The catalysed reaction is ATP + H2O + a folded polypeptide = ADP + phosphate + an unfolded polypeptide.. Together with its co-chaperonin GroES, plays an essential role in assisting protein folding. The GroEL-GroES system forms a nano-cage that allows encapsulation of the non-native substrate proteins and provides a physical environment optimized to promote and accelerate protein folding. This Lactiplantibacillus plantarum (strain ATCC BAA-793 / NCIMB 8826 / WCFS1) (Lactobacillus plantarum) protein is Chaperonin GroEL.